Reading from the N-terminus, the 83-residue chain is Small ribosomal subunit protein bS16 (83 aa).

Belongs to the bacterial ribosomal protein bS16 family.

The sequence is that of Small ribosomal subunit protein bS16 from Thermosynechococcus vestitus (strain NIES-2133 / IAM M-273 / BP-1).